The sequence spans 102 residues: Synaptobrevin-like protein 5 (102 aa).

Residues 17–77 (KIMRTRRELD…VKIKREMSWK (61 aa)) form the v-SNARE coiled-coil homology domain.

The sequence is that of Synaptobrevin-like protein 5 (snb-5) from Caenorhabditis elegans.